Reading from the N-terminus, the 130-residue chain is Small ribosomal subunit protein uS9 (130 aa).

The protein belongs to the universal ribosomal protein uS9 family.

This chain is Small ribosomal subunit protein uS9, found in Paracidovorax citrulli (strain AAC00-1) (Acidovorax citrulli).